The chain runs to 160 residues: Small ribosomal subunit protein bS6 (160 aa).

The interval 100–160 (PSSVLARKSD…DDARETAGAE (61 aa)) is disordered. Basic and acidic residues-rich tracts occupy residues 106-116 (RKSDDRGDRGN) and 136-160 (RSSEDREEYRARGEQDDARETAGAE).

Belongs to the bacterial ribosomal protein bS6 family.

Binds together with bS18 to 16S ribosomal RNA. In Gluconobacter oxydans (strain 621H) (Gluconobacter suboxydans), this protein is Small ribosomal subunit protein bS6.